Reading from the N-terminus, the 265-residue chain is Silaffin-1 (265 aa).

The signal sequence occupies residues 1–19; the sequence is MKLTAIFPLLFTAVGYCAA. Residues 20-107 constitute a propeptide, acidic; that stretch reads QSIADLAAAN…DSEEEELRIL (88 aa). Residues 37–106 form a disordered region; it reads SAQLISADSS…EDSEEEELRI (70 aa). Residues 51 to 90 show a composition bias toward low complexity; the sequence is DSSVESVDAASSDVSGSSVESVDVSGSSLESVDVSGSSLE. Acidic residues predominate over residues 91 to 103; that stretch reads SVDDSSEDSEEEE. One copy of the R1; atypical repeat lies at 108-140; the sequence is SSKKSGSYYSYGTKKSGSYSGYSTKKSASRRIL. Residues 108-257 are 7 X 19 AA repeat of S-S-K-K-S-G-S-Y-S-G-S-K-G-S-K-R-R-[IL]-L; the sequence is SSKKSGSYYS…GSKGSKRRIL (150 aa). Lys-110 carries the post-translational modification N6-poly(methylaminopropyl)lysine. N6,N6-dimethyllysine is present on Lys-111. Over residues 122-133 the composition is skewed to low complexity; sequence KSGSYSGYSTKK. The disordered stretch occupies residues 122 to 265; sequence KSGSYSGYST…ILSGGLRGSM (144 aa). Positions 137 to 140 are excised as a propeptide; it reads RRIL. One copy of the R2; atypical repeat lies at 141–162; that stretch reads SSKKSGSYSGYSTKKSGSRRIL. The segment covering 142-155 has biased composition (low complexity); sequence SKKSGSYSGYSTKK. Residue Lys-143 is modified to N6-poly(methylaminopropyl)lysine. Position 144 is an N6,N6-dimethyllysine (Lys-144). The residue at position 154 (Lys-154) is an N6-poly(methylaminopropyl)lysine. Lys-155 bears the N6,N6-dimethyllysine mark. Positions 159 to 162 are excised as a propeptide; it reads RRIL. 2 positions are modified to phosphoserine: Ser-163 and Ser-164. The R3 repeat unit spans residues 163 to 181; sequence SSKKSGSYSGSKGSKRRIL. Positions 164-174 are enriched in low complexity; it reads SKKSGSYSGSK. N6-poly(methylaminopropyl)lysine is present on Lys-165. Lys-166 bears the N6,N6-dimethyllysine mark. Residues Ser-167, Ser-169, Ser-171, and Ser-173 each carry the phosphoserine modification. Lys-174 carries the N6,N6,N6-trimethyl-5-hydroxylysine modification. Ser-176 is modified (phosphoserine). N6-poly(methylaminopropyl)lysine is present on Lys-177. Positions 178–181 are excised as a propeptide; sequence RRIL. Phosphoserine occurs at positions 182 and 183. Residues 182–200 form an R4 repeat; sequence SSKKSGSYSGSKGSKRRNL. Residues 183-193 show a composition bias toward low complexity; the sequence is SKKSGSYSGSK. Lys-184 carries the N6-poly(methylaminopropyl)lysine modification. Lys-185 carries the N6,N6-dimethyllysine modification. Ser-186, Ser-188, Ser-190, and Ser-192 each carry phosphoserine. The residue at position 193 (Lys-193) is an N6,N6,N6-trimethyl-5-hydroxylysine. Ser-195 is subject to Phosphoserine. N6-poly(methylaminopropyl)lysine is present on Lys-196. The propeptide occupies 197–200; it reads RRNL. Residues Ser-201 and Ser-202 each carry the phosphoserine modification. The R5 repeat unit spans residues 201 to 219; that stretch reads SSKKSGSYSGSKGSKRRIL. A compositionally biased stretch (low complexity) spans 202-212; the sequence is SKKSGSYSGSK. Lys-203 carries the N6-poly(methylaminopropyl)lysine modification. Lys-204 carries the N6,N6-dimethyllysine modification. A phosphoserine mark is found at Ser-205, Ser-207, Ser-209, and Ser-211. Lys-212 carries the N6,N6,N6-trimethyl-5-hydroxylysine modification. Position 214 is a phosphoserine (Ser-214). At Lys-215 the chain carries N6-poly(methylaminopropyl)lysine. A propeptide spanning residues 216 to 219 is cleaved from the precursor; the sequence is RRIL. 2 positions are modified to phosphoserine: Ser-220 and Ser-221. Residues 220-238 form an R6 repeat; that stretch reads SSKKSGSYSGSKGSKRRNL. Residues 221–231 show a composition bias toward low complexity; sequence SKKSGSYSGSK. Lys-222 is modified (N6-poly(methylaminopropyl)lysine). Lys-223 is subject to N6,N6-dimethyllysine. 4 positions are modified to phosphoserine: Ser-224, Ser-226, Ser-228, and Ser-230. Lys-231 bears the N6,N6,N6-trimethyl-5-hydroxylysine mark. Ser-233 bears the Phosphoserine mark. Lys-234 bears the N6-poly(methylaminopropyl)lysine mark. A propeptide spanning residues 235 to 238 is cleaved from the precursor; the sequence is RRNL. A phosphoserine mark is found at Ser-239 and Ser-240. One copy of the R7 repeat lies at 239–257; it reads SSKKSGSYSGSKGSKRRIL. The span at 240-250 shows a compositional bias: low complexity; sequence SKKSGSYSGSK. Lys-241 bears the N6-poly(methylaminopropyl)lysine mark. Residue Lys-242 is modified to N6,N6-dimethyllysine. Ser-243, Ser-245, Ser-247, and Ser-249 each carry phosphoserine. At Lys-250 the chain carries N6,N6,N6-trimethyl-5-hydroxylysine. Ser-252 carries the post-translational modification Phosphoserine. N6-poly(methylaminopropyl)lysine is present on Lys-253. Positions 254-265 are excised as a propeptide; that stretch reads RRILSGGLRGSM.

Silaffin-1A peptides form large aggregates via electrostatic interactions due to intermolecular interactions between the negatively charged phosphate groups and the polyamine moieties. N6-polymethylaminopropylated. Two lysine residues of each peptide bears 6 to 11 repeats of methyl-propylamine, which gives a possible template for nucleation, and may also control the silica colloid size within the silica deposition vesicle (SDV). Post-translationally, phosphorylated. All serine residues of the Silaffin-1A1 peptide are phosphorylated. Only minor amounts of the Silaffin-1A2 peptide are phosphorylated. Phosphorylation is essential for the activity. It may represent a source of anions required for silica formation of diatoms.

Its function is as follows. Catalyzes the polymerization of silica spheres from a silicilic acid solution. It therefore plays a central role in the formation of silica cell wall of diatoms. This is Silaffin-1 (SIL1) from Cylindrotheca fusiformis (Marine diatom).